A 246-amino-acid polypeptide reads, in one-letter code: Complement C1q subcomponent subunit C (246 aa).

A signal peptide spans M1 to A29. A Collagen-like domain is found at G32–G113. 4-hydroxyproline occurs at positions 37, 40, 43, 46, and 64. Positions G44–K116 are disordered. 5-hydroxylysine is present on K76. K76 carries an O-linked (Gal...) hydroxylysine glycan. Residues P82, P97, P100, and P106 each carry the 4-hydroxyproline modification. The segment covering D99–E108 has biased composition (pro residues). The region spanning K116 to D246 is the C1q domain. A disulfide bond links C180 and C194.

Core component of the complement C1 complex, a calcium-dependent complex composed of 1 molecule of the C1Q subcomplex, 2 molecules of C1R and 2 molecules of C1S. The C1Q subcomplex is composed 18 subunits: 3 chains of C1QA, C1QB, and C1QC trimerize to form 6 collagen-like triple helices connected to six globular ligand-recognition modules (C1q domain). Post-translationally, O-linked glycans consist of Glc-Gal disaccharides bound to the oxygen atom of post-translationally added hydroxyl groups.

It is found in the secreted. It localises to the cell surface. The C1Q subcomplex is inhibited by sulfated molecules, such as triterpenoid sulfates, heparan sulfate, or chondroitin sulfates. In terms of biological role, core component of the complement C1 complex, a multiprotein complex that initiates the classical pathway of the complement system, a cascade of proteins that leads to phagocytosis and breakdown of pathogens and signaling that strengthens the adaptive immune system. The classical complement pathway is initiated by the C1Q subcomplex of the C1 complex, which specifically binds IgG or IgM immunoglobulins complexed with antigens, forming antigen-antibody complexes on the surface of pathogens: C1QA, together with C1QB and C1QC, specifically recognizes and binds the Fc regions of IgG or IgM via its C1q domain. Immunoglobulin-binding activates the proenzyme C1R, which cleaves C1S, initiating the proteolytic cascade of the complement system. The C1Q subcomplex is activated by a hexamer of IgG complexed with antigens, while it is activated by a pentameric IgM. The C1Q subcomplex also recognizes and binds phosphatidylserine exposed on the surface of cells undergoing programmed cell death, possibly promoting activation of the complement system. This is Complement C1q subcomponent subunit C from Mus musculus (Mouse).